A 693-amino-acid polypeptide reads, in one-letter code: Endoprotease bli (693 aa).

The signal sequence occupies residues 1–20; the sequence is MYWQLVRILVLFDCLQKILA. Positions 21 to 116 are cleaved as a propeptide — inhibition peptide; sequence IEHDSICIAD…EQRPRVRRKR (96 aa). Aspartate 161 is a binding site for Ca(2+). Positions 167-482 constitute a Peptidase S8 domain; that stretch reads QWYLNNGAQG…YGLMDAGALV (316 aa). Asparagine 194 carries N-linked (GlcNAc...) asparagine glycosylation. The Charge relay system role is filled by aspartate 201. Aspartate 202 is a substrate binding site. Aspartate 210, aspartate 222, aspartate 227, and aspartate 229 together coordinate Ca(2+). Positions 215–242 are disordered; sequence YDPLASTDINGHDDDPTPQDDGDNKHGT. 237 to 238 serves as a coordination point for substrate; it reads DN. The active-site Charge relay system is histidine 240. 4 residues coordinate Ca(2+): isoleucine 251, asparagine 254, tyrosine 256, and glycine 258. 2 cysteine pairs are disulfide-bonded: cysteine 257/cysteine 406 and cysteine 349/cysteine 379. Substrate contacts are provided by residues glutamate 282, 299–304, aspartate 310, and 338–341; these read SWGPED and ASGN. Residue aspartate 304 coordinates Ca(2+). Aspartate 347 contacts Ca(2+). Residues aspartate 352 and tyrosine 354 each coordinate substrate. Glutamate 377 serves as a coordination point for Ca(2+). Catalysis depends on serine 414, which acts as the Charge relay system. Serine 414 serves as a coordination point for substrate. Asparagine 433 and asparagine 518 each carry an N-linked (GlcNAc...) asparagine glycan. The P/Homo B domain occupies 490 to 628; the sequence is TVPEQHICTY…SLLLYGTAEP (139 aa). The cysteines at positions 497 and 526 are disulfide-linked. Residues 629-693 are disordered; the sequence is AQPNDPRHSS…LVSAQPELRV (65 aa). Residues 668–681 are compositionally biased toward basic and acidic residues; sequence DSRDWQPKKVENKK.

The protein belongs to the peptidase S8 family. Furin subfamily. Requires Ca(2+) as cofactor. In terms of processing, N-glycosylated. Post-translationally, the inhibition peptide, which plays the role of an intramolecular chaperone, is probably autocatalytically removed in the endoplasmic reticulum (ER) and remains non-covalently bound as a potent autoinhibitor. Probably following transport to the trans Golgi, a second cleavage within the inhibition propeptide results in propeptide dissociation and bli activation.

It localises to the secreted. It catalyses the reaction Release of mature proteins from their proproteins by cleavage of -Arg-Xaa-Yaa-Arg-|-Zaa- bonds, where Xaa can be any amino acid and Yaa is Arg or Lys. Releases albumin, complement component C3 and von Willebrand factor from their respective precursors.. With respect to regulation, inhibited by the propeptide before the second cleavage. Inhibited by ethylenediaminetetraacetic acid (EDTA), ZnSO(4) and chloroketone DEC-RVKR-CMK. Its function is as follows. Serine endoprotease which cleaves substrates at the RX(K/R)R consensus motif. The sequence is that of Endoprotease bli from Onchocerca volvulus.